Reading from the N-terminus, the 358-residue chain is Peptide chain release factor 1 (358 aa).

Glutamine 233 carries the N5-methylglutamine modification.

Belongs to the prokaryotic/mitochondrial release factor family. Methylated by PrmC. Methylation increases the termination efficiency of RF1.

Its subcellular location is the cytoplasm. Functionally, peptide chain release factor 1 directs the termination of translation in response to the peptide chain termination codons UAG and UAA. The chain is Peptide chain release factor 1 from Brevibacillus brevis (strain 47 / JCM 6285 / NBRC 100599).